A 199-amino-acid chain; its full sequence is Pre T-cell antigen receptor alpha (199 aa).

A signal peptide spans 1–16 (MARTWLLLLLGVRCQA). Residues 17 to 146 (LPSGIAGTPF…PEPLGGTQRQ (130 aa)) lie on the Extracellular side of the membrane. C47 and C107 are disulfide-bonded. N67 and N117 each carry an N-linked (GlcNAc...) asparagine glycan. Residues 147-167 (VLWLSLLRLLLFKLLLLDVLL) traverse the membrane as a helical segment. At 168–199 (TCSHLRLHVLAGQHLQPPPSRKSLPPTHRIWT) the chain is on the cytoplasmic side.

In terms of assembly, heterodimer with TCRB; disulfide linked. This heterodimer assembles with CD3 proteins into a signaling-competent pre-T-cell receptor complex. Interacts with RHBDD1. In terms of tissue distribution, isoform 1 is expressed at higher levels than isoform 2 in the thymus while only isoform 2 is expressed in polyclonal beta-only cells. Isoform 1 shows a predominant expression in immature thymocytes.

It localises to the membrane. The protein localises to the cell membrane. In terms of biological role, component of the pre-T-cell receptor complex (composed of PTCRA, TCRB and the CD3 complex) that plays a crucial role in early T-cell development, particularly alpha-beta T cell differentiation. Isoform 1 acts to retain most TCRB intracellularly, while isoform 2 permits higher levels of cell surface TCRB expression and facilitates signaling from the CD3-TCRB complex. The chain is Pre T-cell antigen receptor alpha from Mus musculus (Mouse).